A 252-amino-acid polypeptide reads, in one-letter code: tRNA pseudouridine synthase A (252 aa).

Residue aspartate 52 is the Nucleophile of the active site. Tyrosine 110 provides a ligand contact to substrate.

This sequence belongs to the tRNA pseudouridine synthase TruA family. Homodimer.

The enzyme catalyses uridine(38/39/40) in tRNA = pseudouridine(38/39/40) in tRNA. Its function is as follows. Formation of pseudouridine at positions 38, 39 and 40 in the anticodon stem and loop of transfer RNAs. The sequence is that of tRNA pseudouridine synthase A from Syntrophotalea carbinolica (strain DSM 2380 / NBRC 103641 / GraBd1) (Pelobacter carbinolicus).